Here is a 169-residue protein sequence, read N- to C-terminus: Cytochrome c-type biogenesis protein CcmE (169 aa).

Residues 1-7 (MTRKQRR) are Cytoplasmic-facing. Residues 8–28 (MTIIGGSLAVLALAAALVLNA) traverse the membrane as a helical; Signal-anchor for type II membrane protein segment. Residues 29–169 (LRDSIVFFST…AQGNPQGAVR (141 aa)) lie on the Periplasmic side of the membrane. Heme-binding residues include histidine 122 and tyrosine 126. Residues 143–169 (DDYGGKASDGVKPAATTAQGNPQGAVR) form a disordered region. Residues 158–169 (TTAQGNPQGAVR) are compositionally biased toward polar residues.

The protein belongs to the CcmE/CycJ family.

The protein localises to the cell inner membrane. In terms of biological role, heme chaperone required for the biogenesis of c-type cytochromes. Transiently binds heme delivered by CcmC and transfers the heme to apo-cytochromes in a process facilitated by CcmF and CcmH. The polypeptide is Cytochrome c-type biogenesis protein CcmE (Bradyrhizobium diazoefficiens (strain JCM 10833 / BCRC 13528 / IAM 13628 / NBRC 14792 / USDA 110)).